The chain runs to 59 residues: Large ribosomal subunit protein bL32 (59 aa).

Positions 1–59 (MAVQQNRKTPSKRGMRRSHDALSGPALSVEPQTGETHRRHHVSPDGYYRGRKVMQGRED) are disordered. A compositionally biased stretch (basic residues) spans 49-59 (RGRKVMQGRED).

It belongs to the bacterial ribosomal protein bL32 family.

The sequence is that of Large ribosomal subunit protein bL32 from Alkalilimnicola ehrlichii (strain ATCC BAA-1101 / DSM 17681 / MLHE-1).